The chain runs to 479 residues: Ribulose bisphosphate carboxylase large chain (479 aa).

Residues 1 to 2 (MS) constitute a propeptide that is removed on maturation. The substrate site is built by Asn123 and Thr173. Lys175 serves as the catalytic Proton acceptor. Lys177 contacts substrate. Mg(2+)-binding residues include Lys201, Asp203, and Glu204. Position 201 is an N6-carboxylysine (Lys201). Ser208 bears the Phosphoserine mark. Residue His294 is the Proton acceptor of the active site. Residues Arg295 and His327 each coordinate substrate. Thr330 is subject to Phosphothreonine. Ser379 is a substrate binding site.

This sequence belongs to the RuBisCO large chain family. Type I subfamily. As to quaternary structure, heterohexadecamer of 8 large chains and 8 small chains; disulfide-linked. The disulfide link is formed within the large subunit homodimers. Requires Mg(2+) as cofactor. In terms of processing, the disulfide bond which can form in the large chain dimeric partners within the hexadecamer appears to be associated with oxidative stress and protein turnover.

It is found in the plastid. The protein resides in the chloroplast. The enzyme catalyses 2 (2R)-3-phosphoglycerate + 2 H(+) = D-ribulose 1,5-bisphosphate + CO2 + H2O. It carries out the reaction D-ribulose 1,5-bisphosphate + O2 = 2-phosphoglycolate + (2R)-3-phosphoglycerate + 2 H(+). RuBisCO catalyzes two reactions: the carboxylation of D-ribulose 1,5-bisphosphate, the primary event in carbon dioxide fixation, as well as the oxidative fragmentation of the pentose substrate in the photorespiration process. Both reactions occur simultaneously and in competition at the same active site. The polypeptide is Ribulose bisphosphate carboxylase large chain (Draba nemorosa (Woodland whitlowgrass)).